A 164-amino-acid chain; its full sequence is MASTATNKITLTSSDGVEVTIERQVAERSILIKNMLEDLGDSGEPIPIPNVNESVLKKVIEWCEHHKGDPPSTGDDDVDSRRKTTDIDEWDQKFMQVDQEMLFEIILAANYLDIKALLDVGCKTVANMIKGKSPEEIRKTFNIQNDFTPEEEDQIRRENEWAEE.

An interaction with the F-box domain of F-box proteins region spans residues 106 to 164 (ILAANYLDIKALLDVGCKTVANMIKGKSPEEIRKTFNIQNDFTPEEEDQIRRENEWAEE).

Belongs to the SKP1 family. As to quaternary structure, component of the SCF (SKP1-CUL1-F-box protein) E3 ubiquitin ligase complexes.

Its pathway is protein modification; protein ubiquitination. Functionally, essential component of the SCF (SKP1-CUL1-F-box protein) E3 ubiquitin ligase complexes, which mediate the ubiquitination and subsequent proteasomal degradation of target proteins. Controls sulfur metabolite repression, probably by mediating the inactivation or degradation of the metR transcription factor. The polypeptide is E3 ubiquitin ligase complex SCF subunit sconC (sconC) (Arthroderma benhamiae (strain ATCC MYA-4681 / CBS 112371) (Trichophyton mentagrophytes)).